The primary structure comprises 498 residues: Glycerol kinase (498 aa).

Thr12 is a binding site for ADP. The ATP site is built by Thr12, Thr13, and Ser14. Position 12 (Thr12) interacts with sn-glycerol 3-phosphate. Position 16 (Arg16) interacts with ADP. Residues Arg82, Glu83, Tyr134, and Asp241 each contribute to the sn-glycerol 3-phosphate site. The glycerol site is built by Arg82, Glu83, Tyr134, Asp241, and Gln242. Positions 263 and 310 each coordinate ADP. The ATP site is built by Thr263, Gly310, Gln314, and Gly411. Positions 411 and 415 each coordinate ADP.

Belongs to the FGGY kinase family.

It catalyses the reaction glycerol + ATP = sn-glycerol 3-phosphate + ADP + H(+). It participates in polyol metabolism; glycerol degradation via glycerol kinase pathway; sn-glycerol 3-phosphate from glycerol: step 1/1. Its activity is regulated as follows. Inhibited by fructose 1,6-bisphosphate (FBP). Its function is as follows. Key enzyme in the regulation of glycerol uptake and metabolism. Catalyzes the phosphorylation of glycerol to yield sn-glycerol 3-phosphate. This is Glycerol kinase from Herminiimonas arsenicoxydans.